The sequence spans 993 residues: ATP-dependent DNA helicase MPH1 (993 aa).

Positions 94 to 261 (IVHKSLFQNT…EVVNNLDISK (168 aa)) constitute a Helicase ATP-binding domain. An ATP-binding site is contributed by 107–114 (IPTGMGKT). A DEAH box motif is present at residues 209-212 (DEAH). In terms of domain architecture, Helicase C-terminal spans 507 to 655 (KVERLHRQEQ…CIDYKKSDRI (149 aa)). Residues 530 to 551 (NDKLERSARRTGSSEEAQISGM) form a disordered region. The segment covering 539-551 (RTGSSEEAQISGM) has biased composition (polar residues).

Belongs to the DEAD box helicase family. DEAH subfamily. FANCM sub-subfamily. In terms of assembly, interacts with the MHF histone-fold complex to form the FANCM-MHF complex.

The protein localises to the nucleus. It catalyses the reaction ATP + H2O = ADP + phosphate + H(+). Functionally, ATP-dependent DNA helicase involved in DNA damage repair by homologous recombination and in genome maintenance. Capable of unwinding D-loops. Plays a role in limiting crossover recombinants during mitotic DNA double-strand break (DSB) repair. Component of a FANCM-MHF complex which promotes gene conversion at blocked replication forks, probably by reversal of the stalled fork. The polypeptide is ATP-dependent DNA helicase MPH1 (Saccharomyces cerevisiae (strain YJM789) (Baker's yeast)).